The following is a 314-amino-acid chain: Homoserine O-acetyltransferase (314 aa).

The Acyl-thioester intermediate role is filled by Cys142. Substrate is bound by residues Lys163 and Ser192. Catalysis depends on His235, which acts as the Proton acceptor. Residue Glu237 is part of the active site. Position 249 (Arg249) interacts with substrate.

This sequence belongs to the MetA family.

The protein localises to the cytoplasm. The enzyme catalyses L-homoserine + acetyl-CoA = O-acetyl-L-homoserine + CoA. Its pathway is amino-acid biosynthesis; L-methionine biosynthesis via de novo pathway; O-acetyl-L-homoserine from L-homoserine: step 1/1. Functionally, transfers an acetyl group from acetyl-CoA to L-homoserine, forming acetyl-L-homoserine. The sequence is that of Homoserine O-acetyltransferase from Streptococcus thermophilus (strain ATCC BAA-250 / LMG 18311).